A 657-amino-acid chain; its full sequence is Methionine--tRNA ligase (657 aa).

Residues 13–23 (YYPSGNLHIGH) carry the 'HIGH' region motif. The short motif at 308–312 (KMSKS) is the 'KMSKS' region element. Position 311 (lysine 311) interacts with ATP. Residues 557–657 (DFDKVEIKAA…SAIPNGAVIK (101 aa)) form the tRNA-binding domain.

Belongs to the class-I aminoacyl-tRNA synthetase family. MetG type 2B subfamily. In terms of assembly, homodimer.

The protein localises to the cytoplasm. It carries out the reaction tRNA(Met) + L-methionine + ATP = L-methionyl-tRNA(Met) + AMP + diphosphate. Is required not only for elongation of protein synthesis but also for the initiation of all mRNA translation through initiator tRNA(fMet) aminoacylation. The sequence is that of Methionine--tRNA ligase from Staphylococcus aureus (strain MRSA252).